Reading from the N-terminus, the 521-residue chain is AAA ATPase forming ring-shaped complexes (521 aa).

The stretch at 4–44 (TEDLAALNDRLMAKNHALAEALSRAGKELTKAKSQLAQLAQ) forms a coiled coil. 235 to 240 (GNGKTM) is a binding site for ATP.

This sequence belongs to the AAA ATPase family. As to quaternary structure, homohexamer. Assembles into a hexameric ring structure.

The protein is AAA ATPase forming ring-shaped complexes of Bifidobacterium longum (strain NCC 2705).